The chain runs to 140 residues: Small ribosomal subunit protein uS12 (140 aa).

2 disordered regions span residues 1–20 (MPTINQLVRKGRKSKVVKSD) and 35–55 (QTNVSSPQKRGVCTRVGTMTP). The residue at position 102 (Asp102) is a 3-methylthioaspartic acid. The interval 121-140 (DGRMQGRSKYGTKRPKAAKK) is disordered. A compositionally biased stretch (basic residues) spans 130–140 (YGTKRPKAAKK).

The protein belongs to the universal ribosomal protein uS12 family. Part of the 30S ribosomal subunit. Contacts proteins S8 and S17. May interact with IF1 in the 30S initiation complex.

In terms of biological role, with S4 and S5 plays an important role in translational accuracy. Interacts with and stabilizes bases of the 16S rRNA that are involved in tRNA selection in the A site and with the mRNA backbone. Located at the interface of the 30S and 50S subunits, it traverses the body of the 30S subunit contacting proteins on the other side and probably holding the rRNA structure together. The combined cluster of proteins S8, S12 and S17 appears to hold together the shoulder and platform of the 30S subunit. The sequence is that of Small ribosomal subunit protein uS12 from Exiguobacterium sp. (strain ATCC BAA-1283 / AT1b).